Reading from the N-terminus, the 179-residue chain is Large ribosomal subunit protein uL6 (179 aa).

The protein belongs to the universal ribosomal protein uL6 family. In terms of assembly, part of the 50S ribosomal subunit.

In terms of biological role, this protein binds to the 23S rRNA, and is important in its secondary structure. It is located near the subunit interface in the base of the L7/L12 stalk, and near the tRNA binding site of the peptidyltransferase center. The protein is Large ribosomal subunit protein uL6 of Herpetosiphon aurantiacus (strain ATCC 23779 / DSM 785 / 114-95).